The sequence spans 105 residues: Large ribosomal subunit protein bL21 (105 aa).

The protein belongs to the bacterial ribosomal protein bL21 family. As to quaternary structure, part of the 50S ribosomal subunit. Contacts protein L20.

Its function is as follows. This protein binds to 23S rRNA in the presence of protein L20. This Blochmanniella pennsylvanica (strain BPEN) protein is Large ribosomal subunit protein bL21.